The sequence spans 719 residues: Histone-lysine N-methyltransferase SETDB2 (719 aa).

The segment covering 72–82 has biased composition (polar residues); sequence SQKEVNAQSSD. Positions 72-102 are disordered; that stretch reads SQKEVNAQSSDPMPVTQKEQENKSNAFPSTS. In terms of domain architecture, MBD spans 157–229; that stretch reads LNLKGENPLQ…DNFSFNTYVQ (73 aa). The 74-residue stretch at 291-364 folds into the Pre-SET domain; it reads DSCDCSEGCI…LCQNRVVQHG (74 aa). Zn(2+) contacts are provided by cysteine 293, cysteine 295, cysteine 299, cysteine 305, cysteine 307, cysteine 345, cysteine 349, cysteine 351, and cysteine 356. An SET domain is found at 367 to 694; the sequence is VRLQVFKTEQ…ARTELTWDYG (328 aa). S-adenosyl-L-methionine contacts are provided by residues 377 to 379 and aspartate 418; that span reads KGW. Residues 508–547 are disordered; it reads FVSSESVTPEDNDGFKPPREHLNSKTKGAQKDSSSNHVDE. Residues 520–530 show a composition bias toward basic and acidic residues; it reads DGFKPPREHLN. Over residues 532-543 the composition is skewed to polar residues; it reads KTKGAQKDSSSN. Residues arginine 648 and 651–652 contribute to the S-adenosyl-L-methionine site; that span reads NH. 4 residues coordinate Zn(2+): cysteine 654, cysteine 707, cysteine 709, and cysteine 714.

Belongs to the class V-like SAM-binding methyltransferase superfamily. Ubiquitous. Highest expression in heart, testis and ovary.

The protein localises to the nucleus. It is found in the chromosome. The catalysed reaction is N(6),N(6)-dimethyl-L-lysyl(9)-[histone H3] + S-adenosyl-L-methionine = N(6),N(6),N(6)-trimethyl-L-lysyl(9)-[histone H3] + S-adenosyl-L-homocysteine + H(+). Functionally, histone methyltransferase involved in left-right axis specification in early development and mitosis. Specifically trimethylates 'Lys-9' of histone H3 (H3K9me3). H3K9me3 is a specific tag for epigenetic transcriptional repression that recruits HP1 (CBX1, CBX3 and/or CBX5) proteins to methylated histones. Contributes to H3K9me3 in both the interspersed repetitive elements and centromere-associated repeats. Plays a role in chromosome condensation and segregation during mitosis. In Homo sapiens (Human), this protein is Histone-lysine N-methyltransferase SETDB2 (SETDB2).